Reading from the N-terminus, the 76-residue chain is Acyl carrier protein (76 aa).

The region spanning 2-76 (SNIEERVIKV…QSAIDFVKSR (75 aa)) is the Carrier domain. Ser37 carries the O-(pantetheine 4'-phosphoryl)serine modification.

The protein belongs to the acyl carrier protein (ACP) family. In terms of processing, 4'-phosphopantetheine is transferred from CoA to a specific serine of apo-ACP by AcpS. This modification is essential for activity because fatty acids are bound in thioester linkage to the sulfhydryl of the prosthetic group.

The protein localises to the cytoplasm. The protein operates within lipid metabolism; fatty acid biosynthesis. Functionally, carrier of the growing fatty acid chain in fatty acid biosynthesis. The protein is Acyl carrier protein of Dichelobacter nodosus (strain VCS1703A).